Reading from the N-terminus, the 432-residue chain is Transcriptional adapter 3 (432 aa).

The stretch at 40-69 forms a coiled coil; that stretch reads IEELDTLQLELETLLSSASRRLRVLEAETQ. Disordered stretches follow at residues 88–127 and 275–313; these read KEHE…RNMQ and SPVE…HTKS. The span at 293 to 305 shows a compositional bias: polar residues; sequence DGASTSPRSQNKP. A coiled-coil region spans residues 367–407; it reads LLRLAKEEMNRQELRQRVRMADNEVMDAFRKIMAARQKKRT.

Belongs to the NGG1 family.

The protein resides in the nucleus. Functions as a component of the PCAF complex. The PCAF complex is capable of efficiently acetylating histones in a nucleosomal context. This chain is Transcriptional adapter 3 (tada3), found in Xenopus tropicalis (Western clawed frog).